The sequence spans 155 residues: Small ribosomal subunit protein uS7 (155 aa).

It belongs to the universal ribosomal protein uS7 family. As to quaternary structure, part of the 30S ribosomal subunit. Contacts proteins S9 and S11.

One of the primary rRNA binding proteins, it binds directly to 16S rRNA where it nucleates assembly of the head domain of the 30S subunit. Is located at the subunit interface close to the decoding center, probably blocks exit of the E-site tRNA. The polypeptide is Small ribosomal subunit protein uS7 (Sulfurimonas denitrificans (strain ATCC 33889 / DSM 1251) (Thiomicrospira denitrificans (strain ATCC 33889 / DSM 1251))).